A 47-amino-acid polypeptide reads, in one-letter code: uncharacterized protein (47 aa).

A disordered region spans residues 24–47; it reads FGPNPIEPPTDIAPDPDSTKTWLI.

This is an uncharacterized protein from Mycobacterium tuberculosis (strain ATCC 25618 / H37Rv).